The primary structure comprises 532 residues: Probable G-protein coupled receptor Mth-like 11 (532 aa).

The first 20 residues, 1 to 20 (MGMFRVEYLLLGILVIGVRS), serve as a signal peptide directing secretion. At 21 to 229 (RDIPNCDFFD…VRKSRLSNAS (209 aa)) the chain is on the extracellular side. Disulfide bonds link cysteine 26/cysteine 80, cysteine 82/cysteine 87, cysteine 91/cysteine 184, cysteine 92/cysteine 103, and cysteine 145/cysteine 204. Asparagine 42 carries an N-linked (GlcNAc...) asparagine glycan. N-linked (GlcNAc...) asparagine glycosylation is found at asparagine 110, asparagine 123, asparagine 166, asparagine 195, and asparagine 227. Residues 230–250 (IPVKFSSVFFMVITIAAYLWL) traverse the membrane as a helical segment. The Cytoplasmic portion of the chain corresponds to 251–262 (PKFRSLHGKCCN). The helical transmembrane segment at 263 to 283 (LYFICLAITFLLNVISLFGIF) threads the bilayer. At 284-290 (ELKTPIC) the chain is on the extracellular side. Residues 291–311 (YLTGYAGYFTVMATFLWLSVI) traverse the membrane as a helical segment. Topologically, residues 312-339 (SFDVWRRFAMRKFQVFYKNKRSSFFNYN) are cytoplasmic. A helical membrane pass occupies residues 340 to 360 (IIVWSSAGLLTCIIFLVDQFV). The Extracellular segment spans residues 361–386 (ETNLDNPYNPAVGVFSCWIFTNGWSA). A helical membrane pass occupies residues 387-407 (TFYFYAPLAILIILNCASFFL). Residues 408-439 (TTRYIYVENKQNQKVLNNSEPQKLSRNHANYR) lie on the Cytoplasmic side of the membrane. Residues 440-460 (IYFRLFIIMGGSWFLEIIAFI) form a helical membrane-spanning segment. Residues 461-469 (CEMENMWKP) lie on the Extracellular side of the membrane. The chain crosses the membrane as a helical span at residues 470–490 (LIILNDYINCSQGIIIFVATF). The Cytoplasmic portion of the chain corresponds to 491–532 (CNHEMFRLIRKRIQNRNITSLELTNTSRPVESEKMADVELGK).

This sequence belongs to the G-protein coupled receptor 2 family. Mth subfamily.

It is found in the cell membrane. This Drosophila melanogaster (Fruit fly) protein is Probable G-protein coupled receptor Mth-like 11 (mthl11).